Consider the following 457-residue polypeptide: Glycine receptor subunit alpha-1 (457 aa).

The first 28 residues, 1–28, serve as a signal peptide directing secretion; that stretch reads MYSFNTLRFYLWETIVFFSLAASKEAEA. Residues 29 to 250 lie on the Extracellular side of the membrane; sequence ARSAPKPMSP…RFHLERQMGY (222 aa). An N-linked (GlcNAc...) asparagine glycan is attached at N66. Glycine-binding residues include R93 and S157. C166 and C180 are oxidised to a cystine. Zn(2+)-binding residues include E220 and D222. C226 and C237 are joined by a disulfide. Residue 230–235 participates in strychnine binding; it reads YNTGKF. A glycine-binding site is contributed by T232. H243 is a binding site for Zn(2+). A helical membrane pass occupies residues 251-272; the sequence is YLIQMYIPSLLIVILSWISFWI. The Cytoplasmic portion of the chain corresponds to 273 to 277; the sequence is NMDAA. Residues 278 to 298 form a helical membrane-spanning segment; the sequence is PARVGLGITTVLTMTTQSSGS. At 299-309 the chain is on the extracellular side; sequence RASLPKVSYVK. Residues 310–330 form a helical membrane-spanning segment; it reads AIDIWMAVCLLFVFSALLEYA. Residues 331-425 are Cytoplasmic-facing; it reads AVNFVSRQHK…FIQRAKKIDK (95 aa). Positions 391–410 are disordered; it reads KGANNNNTTNPPPAPSKSPE. The chain crosses the membrane as a helical span at residues 426–446; it reads ISRIGFPMAFLIFNMFYWIIY. Topologically, residues 447-457 are extracellular; sequence KIVRREDVHNK.

This sequence belongs to the ligand-gated ion channel (TC 1.A.9) family. Glycine receptor (TC 1.A.9.3) subfamily. GLRA1 sub-subfamily. Interacts with GLRB to form heteropentameric channels; this is probably the predominant form in vivo. Heteropentamer composed of four GLRA1 subunits and one GLRB subunit. Heteropentamer composed of two GLRA1 and three GLRB. Heteropentamer composed of three GLRA1 and two GLRB. Homopentamer (in vitro). Both homopentamers and heteropentamers form functional ion channels, but their characteristics are subtly different. Detected in spinal cord neurons. Detected in brain stem neurons. Detected at lower levels in hippocampus and cerebellum. Detected in the inner plexiform layer of the retina (at protein level).

Its subcellular location is the postsynaptic cell membrane. It localises to the synapse. The protein localises to the perikaryon. The protein resides in the cell projection. It is found in the dendrite. Its subcellular location is the cell membrane. It catalyses the reaction chloride(in) = chloride(out). Channel opening is triggered by extracellular glycine. Channel characteristics depend on the subunit composition; heteropentameric channels are activated by lower glycine levels and display faster desensitization. Channel opening is also triggered by taurine and beta-alanine. Inhibited by strychnine. Strychnine binding locks the channel in a closed conformation and prevents channel opening in response to extracellular glycine. Inhibited by picrotoxin. Channel activity is enhanced by 5 uM Zn(2+) and inhibited by 100 uM Zn(2+). Functionally, subunit of heteromeric glycine-gated chloride channels. Plays an important role in the down-regulation of neuronal excitability. Contributes to the generation of inhibitory postsynaptic currents. Channel activity is potentiated by ethanol. Potentiation of channel activity by intoxicating levels of ethanol contribute to the sedative effects of ethanol. The chain is Glycine receptor subunit alpha-1 (Glra1) from Mus musculus (Mouse).